The chain runs to 338 residues: Glycerol-3-phosphate dehydrogenase [NAD(P)+] (338 aa).

4 residues coordinate NADPH: Ser14, Tyr15, His35, and Lys109. Sn-glycerol 3-phosphate-binding residues include Lys109, Gly138, and Thr140. An NADPH-binding site is contributed by Ala142. Residues Lys194, Asp247, Ser257, Arg258, and Asn259 each coordinate sn-glycerol 3-phosphate. The active-site Proton acceptor is the Lys194. Arg258 contributes to the NADPH binding site. 2 residues coordinate NADPH: Val282 and Glu284.

It belongs to the NAD-dependent glycerol-3-phosphate dehydrogenase family.

Its subcellular location is the cytoplasm. It carries out the reaction sn-glycerol 3-phosphate + NAD(+) = dihydroxyacetone phosphate + NADH + H(+). It catalyses the reaction sn-glycerol 3-phosphate + NADP(+) = dihydroxyacetone phosphate + NADPH + H(+). It participates in membrane lipid metabolism; glycerophospholipid metabolism. Its function is as follows. Catalyzes the reduction of the glycolytic intermediate dihydroxyacetone phosphate (DHAP) to sn-glycerol 3-phosphate (G3P), the key precursor for phospholipid synthesis. The protein is Glycerol-3-phosphate dehydrogenase [NAD(P)+] of Sodalis glossinidius (strain morsitans).